Reading from the N-terminus, the 593-residue chain is Efflux pump FUBT (593 aa).

The interval 1 to 44 is disordered; the sequence is MAIDPQPSSPSLSSETIANDTIGNDNNVNEPSVEPKTQENQHTV. Residues 9–30 show a composition bias toward polar residues; that stretch reads SPSLSSETIANDTIGNDNNVNE. N-linked (GlcNAc...) asparagine glycosylation occurs at Asn19. The next 12 membrane-spanning stretches (helical) occupy residues 98–118, 135–155, 167–187, 195–215, 227–247, 254–274, 337–357, 367–387, 410–430, 438–458, 468–488, and 503–523; these read WAFV…SSAY, VATL…LIWA, FFFT…AGSI, FLTG…IADM, MFSG…GFLG, WLHG…TVFI, IYIS…PIVF, IGGL…ISFA, LPPA…FAWT, IVPI…FMAL, IFAA…GAAF, and WASS…FLFY. The segment at 570–593 is disordered; that stretch reads THNSHASAAHSHGHRRSLSYTRSV.

Belongs to the major facilitator superfamily. DHA1 family. Polyamines/proton antiporter (TC 2.A.1.2.16) subfamily.

It localises to the cell membrane. In terms of biological role, efflux pump involved in export of fusaric acid, a mycotoxin with low to moderate toxicity to animals and humans, but with high phytotoxic properties. Constitutes a self-protecting mechanism of the fungus against critical levels of FSA within the cell. The polypeptide is Efflux pump FUBT (Fusarium oxysporum (Fusarium vascular wilt)).